The primary structure comprises 431 residues: tRNA(Ile)-lysidine synthase (431 aa).

ATP is bound at residue 19 to 24 (STGIDS).

This sequence belongs to the tRNA(Ile)-lysidine synthase family.

The protein resides in the cytoplasm. The enzyme catalyses cytidine(34) in tRNA(Ile2) + L-lysine + ATP = lysidine(34) in tRNA(Ile2) + AMP + diphosphate + H(+). In terms of biological role, ligates lysine onto the cytidine present at position 34 of the AUA codon-specific tRNA(Ile) that contains the anticodon CAU, in an ATP-dependent manner. Cytidine is converted to lysidine, thus changing the amino acid specificity of the tRNA from methionine to isoleucine. In Staphylococcus aureus (strain MW2), this protein is tRNA(Ile)-lysidine synthase.